Here is a 635-residue protein sequence, read N- to C-terminus: Threonine--tRNA ligase (635 aa).

Residues 1–61 (MIKITLKDGK…HKDSSLEILT (61 aa)) form the TGS domain. Residues 242-532 (DHRKLGKELD…LIEQYAGAFP (291 aa)) are catalytic. Zn(2+) is bound by residues cysteine 333, histidine 384, and histidine 509.

The protein belongs to the class-II aminoacyl-tRNA synthetase family. As to quaternary structure, homodimer. Zn(2+) serves as cofactor.

The protein resides in the cytoplasm. It catalyses the reaction tRNA(Thr) + L-threonine + ATP = L-threonyl-tRNA(Thr) + AMP + diphosphate + H(+). Its function is as follows. Catalyzes the attachment of threonine to tRNA(Thr) in a two-step reaction: L-threonine is first activated by ATP to form Thr-AMP and then transferred to the acceptor end of tRNA(Thr). Also edits incorrectly charged L-seryl-tRNA(Thr). This Clostridium botulinum (strain Loch Maree / Type A3) protein is Threonine--tRNA ligase.